The primary structure comprises 983 residues: Protein translocase subunit SecA (983 aa).

ATP-binding positions include Gln-83, 101–105, and Asp-489; that span reads GEGKT. Positions 948 to 983 are disordered; that stretch reads ISSEEEDNNEKTNINNNEDLERTKGEAQQTAKNPNE. Residues 973–983 show a composition bias toward polar residues; the sequence is EAQQTAKNPNE.

It belongs to the SecA family. Monomer and homodimer. Part of the essential Sec protein translocation apparatus which comprises SecA, SecYEG and auxiliary proteins SecDF. Other proteins may also be involved.

Its subcellular location is the cell membrane. The protein resides in the cytoplasm. The enzyme catalyses ATP + H2O + cellular proteinSide 1 = ADP + phosphate + cellular proteinSide 2.. Functionally, part of the Sec protein translocase complex. Interacts with the SecYEG preprotein conducting channel. Has a central role in coupling the hydrolysis of ATP to the transfer of proteins into and across the cell membrane, serving as an ATP-driven molecular motor driving the stepwise translocation of polypeptide chains across the membrane. The polypeptide is Protein translocase subunit SecA (Mesomycoplasma hyopneumoniae (strain 232) (Mycoplasma hyopneumoniae)).